The primary structure comprises 1036 residues: Presequence protease, mitochondrial (1036 aa).

Residues methionine 1–arginine 15 constitute a mitochondrion transit peptide. Residue histidine 104 coordinates Zn(2+). The Proton acceptor role is filled by glutamate 107. Residues histidine 108 and glutamate 205 each contribute to the Zn(2+) site. Cysteine 119 and cysteine 556 are disulfide-bonded. Lysine 759 is subject to N6-acetyllysine. Lysine 770 is subject to N6-acetyllysine; alternate. Lysine 770 carries the post-translational modification N6-succinyllysine; alternate. Positions serine 806–serine 833 are disordered. Residue lysine 848 is modified to N6-succinyllysine. Lysine 883 carries the N6-acetyllysine modification. Lysine 945 carries the N6-succinyllysine modification.

Belongs to the peptidase M16 family. PreP subfamily. As to quaternary structure, monomer and homodimer; homodimerization is induced by binding of the substrate. It depends on Zn(2+) as a cofactor. A disulfide bond locks the enzyme in the closed conformation preventing substrate entry into the catalytic chamber.

The protein resides in the mitochondrion matrix. With respect to regulation, mainly exists in a closed and catalytically competent conformation but a closed-to-open switch allows substrate entry into the catalytic chamber. Substrate binding induces closure and dimerization. A disulfide bond may lock the enzyme in a closed conformation preventing substrate entry into the catalytic chamber, participating in redox regulation of the enzyme. Inhibited by metal-chelating agents. Inhibited by nickel and zinc excess, and slightly activated by manganese. In terms of biological role, metalloendopeptidase of the mitochondrial matrix that functions in peptide cleavage and degradation rather than in protein processing. Has an ATP-independent activity. Specifically cleaves peptides in the range of 5 to 65 residues. Shows a preference for cleavage after small polar residues and before basic residues, but without any positional preference. Degrades the transit peptides of mitochondrial proteins after their cleavage. Also degrades other unstructured peptides. It is also able to degrade amyloid-beta protein 40, one of the peptides produced by APP processing, when it accumulates in mitochondrion. It is a highly efficient protease, at least toward amyloid-beta protein 40. Cleaves that peptide at a specific position and is probably not processive, releasing digested peptides intermediates that can be further cleaved subsequently. It is also able to degrade amyloid-beta protein 42. In Mus musculus (Mouse), this protein is Presequence protease, mitochondrial.